The sequence spans 609 residues: Polyadenylate-binding protein 7 (609 aa).

RRM domains lie at 24–102 (ASLY…WSVR), 112–189 (GNVF…KFMK), 201–278 (TNLY…RAQK), and 304–381 (SNIY…IAQK). The region spanning 509-586 (EMKKSIQQRQ…AFEVLKSSKT (78 aa)) is the PABC domain.

The protein belongs to the polyadenylate-binding protein type-1 family. In terms of tissue distribution, expressed predominantly in siliques.

Its subcellular location is the cytoplasm. It localises to the nucleus. Binds the poly(A) tail of mRNA. Appears to be an important mediator of the multiple roles of the poly(A) tail in mRNA biogenesis, stability and translation. The polypeptide is Polyadenylate-binding protein 7 (PAB7) (Arabidopsis thaliana (Mouse-ear cress)).